A 216-amino-acid chain; its full sequence is Thiamine-phosphate synthase (216 aa).

4-amino-2-methyl-5-(diphosphooxymethyl)pyrimidine-binding positions include 41–45 (QYREK) and N73. Positions 74 and 93 each coordinate Mg(2+). S111 contributes to the 4-amino-2-methyl-5-(diphosphooxymethyl)pyrimidine binding site. 137-139 (TTT) contributes to the 2-[(2R,5Z)-2-carboxy-4-methylthiazol-5(2H)-ylidene]ethyl phosphate binding site. A 4-amino-2-methyl-5-(diphosphooxymethyl)pyrimidine-binding site is contributed by K140. Residues G168 and 188-189 (VS) contribute to the 2-[(2R,5Z)-2-carboxy-4-methylthiazol-5(2H)-ylidene]ethyl phosphate site.

Belongs to the thiamine-phosphate synthase family. The cofactor is Mg(2+).

The enzyme catalyses 2-[(2R,5Z)-2-carboxy-4-methylthiazol-5(2H)-ylidene]ethyl phosphate + 4-amino-2-methyl-5-(diphosphooxymethyl)pyrimidine + 2 H(+) = thiamine phosphate + CO2 + diphosphate. It carries out the reaction 2-(2-carboxy-4-methylthiazol-5-yl)ethyl phosphate + 4-amino-2-methyl-5-(diphosphooxymethyl)pyrimidine + 2 H(+) = thiamine phosphate + CO2 + diphosphate. It catalyses the reaction 4-methyl-5-(2-phosphooxyethyl)-thiazole + 4-amino-2-methyl-5-(diphosphooxymethyl)pyrimidine + H(+) = thiamine phosphate + diphosphate. The protein operates within cofactor biosynthesis; thiamine diphosphate biosynthesis; thiamine phosphate from 4-amino-2-methyl-5-diphosphomethylpyrimidine and 4-methyl-5-(2-phosphoethyl)-thiazole: step 1/1. In terms of biological role, condenses 4-methyl-5-(beta-hydroxyethyl)thiazole monophosphate (THZ-P) and 2-methyl-4-amino-5-hydroxymethyl pyrimidine pyrophosphate (HMP-PP) to form thiamine monophosphate (TMP). The sequence is that of Thiamine-phosphate synthase from Chloroflexus aurantiacus (strain ATCC 29366 / DSM 635 / J-10-fl).